Here is a 464-residue protein sequence, read N- to C-terminus: Arylsulfatase (464 aa).

The N-terminal stretch at 1-20 is a signal peptide; sequence MNKKAMAAAVSMILAGGAHA. Aspartate 34, aspartate 35, and serine 72 together coordinate Ca(2+). Serine 72 acts as the Nucleophile in catalysis. 3-oxoalanine (Ser) is present on serine 72. Residue histidine 134 is part of the active site. Ca(2+) contacts are provided by aspartate 329 and asparagine 330.

Belongs to the sulfatase family. Requires Ca(2+) as cofactor. Post-translationally, the conversion to 3-oxoalanine (also known as C-formylglycine, FGly), of a serine or cysteine residue in prokaryotes and of a cysteine residue in eukaryotes, is critical for catalytic activity.

The protein resides in the periplasm. It carries out the reaction an aryl sulfate + H2O = a phenol + sulfate + H(+). Plays an important role in the mineralization of sulfates. The protein is Arylsulfatase (atsA) of Klebsiella aerogenes (Enterobacter aerogenes).